Reading from the N-terminus, the 179-residue chain is Large ribosomal subunit protein uL5 (179 aa).

It belongs to the universal ribosomal protein uL5 family. As to quaternary structure, part of the 50S ribosomal subunit; part of the 5S rRNA/L5/L18/L25 subcomplex. Contacts the 5S rRNA and the P site tRNA. Forms a bridge to the 30S subunit in the 70S ribosome.

In terms of biological role, this is one of the proteins that bind and probably mediate the attachment of the 5S RNA into the large ribosomal subunit, where it forms part of the central protuberance. In the 70S ribosome it contacts protein S13 of the 30S subunit (bridge B1b), connecting the 2 subunits; this bridge is implicated in subunit movement. Contacts the P site tRNA; the 5S rRNA and some of its associated proteins might help stabilize positioning of ribosome-bound tRNAs. This is Large ribosomal subunit protein uL5 from Bacillus anthracis (strain A0248).